The following is a 126-amino-acid chain: Scygonadin (126 aa).

The N-terminal stretch at 1–24 (MRSSLLLGLTVVVLLGVIVPPCMA) is a signal peptide.

As to expression, expressed in the ejaculatory ducts of mature males. Not detected in the ejaculatory ducts of immature males. Not detected in hepatopancreas, female reproductive tract, eyes, exoskeleton, subcuticular epithelia, heart, gills, stomach, muscle and hemocytes.

The protein resides in the secreted. Functionally, has antibacterial activity against the Gram-positive bacterium M.luteus with an IC(90) of 125ug/ml. Has weak antibacterial activity against the Gram-negative bacterium A.hydrophila. This chain is Scygonadin, found in Scylla serrata (Mud crab).